Here is a 680-residue protein sequence, read N- to C-terminus: MTIMTSPAHRPPASSLSIPHEQAQSAALKGASLAFQKQLDASKKKASPPGPNHNNKLTTDPRGGALVAATSAASLSNQTTGGSSVADHHHGVPEHATLSSRLAQLQQRSGSPHLRPPGNAGGPRSASFIAATLAASRSTSPSPSRKNSVVTPQEQRRRAGAHSRASSVGSLRLTSPSNLGPSPGQGVDYGGYDGEDDADLDHDEDTGFRRLGRRKVVAETPTLPAREQSRRRDGDPVKSPSPVRDTEVPQPRRKVIDRVPEQEEPASPVQKPRPKPKPKPKPKPEKIIKTEPRAAPEPVESKRAEQYPGSEPTSPSIRRASVQQPKPKVARAQPARTPIKAYHSQKEIQVLSRILMPKDVDDIDCGPLTLDGAHGPPFRERVDSISSDDTFFSTSSGQGRRAPTPPPPRRIRSVRETPSRPHSEATTPSSQQRSTSSQSKQTPTSANRSSLALDSLTNAIVASSLASARHTPASRSQTPAPVPVPSRKRNDRLASNLTGGGMSRSHSRSPPKKQGMLTTLRAPHSKSDDEEARKHKERHRKRGPLGGKKHVHHEGSRRRWRDSVTAEERRRYEALWASNRGLLLPPKDGGVGQQHQQQQPEDLVANVVVRDLWSRSRLPHDELAEVWDLVDLGRRGSLSKEEFVVGMWLIDMRLRGRKIPPRVSQSVWDSVKGLRVPAPA.

Disordered stretches follow at residues 1–341 (MTIM…PIKA), 361–451 (DDID…RSSL), and 466–563 (ASAR…WRDS). Polar residues predominate over residues 14-25 (SSLSIPHEQAQS). The span at 65–76 (ALVAATSAASLS) shows a compositional bias: low complexity. A compositionally biased stretch (polar residues) spans 97–110 (TLSSRLAQLQQRSG). A compositionally biased stretch (low complexity) spans 130-145 (AATLAASRSTSPSPSR). Residues 193 to 204 (DGEDDADLDHDE) are compositionally biased toward acidic residues. The segment covering 227–236 (EQSRRRDGDP) has biased composition (basic and acidic residues). The segment covering 272 to 281 (PRPKPKPKPK) has biased composition (basic residues). Basic and acidic residues predominate over residues 282–305 (PKPEKIIKTEPRAAPEPVESKRAE). The span at 311–324 (EPTSPSIRRASVQQ) shows a compositional bias: polar residues. A compositionally biased stretch (low complexity) spans 384 to 402 (SISSDDTFFSTSSGQGRRA). Basic and acidic residues predominate over residues 413 to 423 (SVRETPSRPHS). The segment covering 426–445 (TTPSSQQRSTSSQSKQTPTS) has biased composition (low complexity). A compositionally biased stretch (basic and acidic residues) spans 525–534 (SKSDDEEARK). Basic residues predominate over residues 535–560 (HKERHRKRGPLGGKKHVHHEGSRRRW). Positions 568-674 (ERRRYEALWA…QSVWDSVKGL (107 aa)) constitute an EH domain.

This sequence belongs to the IRS4 family.

Positive regulator of phosphatidylinositol 4,5-bisphosphate turnover and negatively regulates signaling through the cell integrity pathway. Involved in rDNA silencing. This is Increased rDNA silencing protein 4 (IRS4) from Pyricularia oryzae (strain 70-15 / ATCC MYA-4617 / FGSC 8958) (Rice blast fungus).